A 1010-amino-acid chain; its full sequence is Outer kinetochore KNL1 complex subunit knl-1 (1010 aa).

9 consecutive repeat copies span residues 85–88 (MDIS), 109–112 (MDMS), 228–231 (MDTS), 255–258 (MDIT), 278–281 (MDIS), 323–326 (MDIT), 346–349 (MDIS), 402–405 (MDIT), and 428–431 (MDIS). The segment at 85 to 431 (MDISESPACT…LQKEDLMDIS (347 aa)) is 9 X 4 AA repeats of M-[D/E]-[I/L/M]-[S/T]. 2 coiled-coil regions span residues 820–915 (RIVE…GLDK) and 956–988 (KALR…KFAQ).

As to quaternary structure, component of the KNL1 complex composed of knl-1 and kbp-5. Part of the ten-subunit outer kinetochore KMN network that includes the KNL1, MIS12 and NDC80 complexes. Interacts with the protein phosphatase 1 (PP1) catalytic subunit gsp-1; the interaction is direct. Interacts with the protein phosphatase 1 (PP1) catalytic subunit gsp-2; the interaction is direct. Interacts with the MIS12 complex subunits kbp-1, kbp-2 and mis-12. Interacts with the NDC80 complex components ndc-80 and him-10. Interacts with knl-3. Interacts with kbp-3. Interacts with kbp-4. Interacts with kbp-5.

It localises to the cytoplasm. It is found in the cell cortex. The protein resides in the chromosome. Its subcellular location is the centromere. The protein localises to the kinetochore. Functionally, acts as a component of the outer kinetochore KNL1 complex that serves as a docking point for spindle assembly checkpoint components and mediates microtubule-kinetochore interactions. Kinetochores, consisting of a centromere-associated inner segment and a microtubule-contacting outer segment, play a crucial role in chromosome segregation by mediating the physical connection between centromeric DNA and spindle microtubules. The outer kinetochore is made up of the ten-subunit KMN network, comprising the MIS12, NDC80 and KNL1 complexes, and auxiliary microtubule-associated components; together they connect the outer kinetochore with the inner kinetochore, bind microtubules, and mediate interactions with mitotic checkpoint proteins that delay anaphase until chromosomes are bioriented on the spindle. Binds the protein phosphatase 1 catalytic subunits gsp-1 and gsp-2, which has a role in delaying formation of load-bearing kinetochore-microtubule attachments. Required for the recruitment of spindle-assembly checkpoint components bub-1 and mdf-1/2 to unattached kinetochores. Binds microtubules which plays a role in silencing of the spindle assembly checkpoint, but not the formation of load-bearing microtubule-kinetochore attachments. Has a role in the correct localization of the spindly-like protein spdl-1 and the RZZ complex that is composed of rod-1, czw-1 and zwl-1 to kinetochores. This is Outer kinetochore KNL1 complex subunit knl-1 (knl-1) from Caenorhabditis elegans.